We begin with the raw amino-acid sequence, 571 residues long: Phototropic-responsive NPH3 family protein NPY1 (571 aa).

The 69-residue stretch at 29 to 97 (SDVTIHVGEV…CYGMTVTLNA (69 aa)) folds into the BTB domain. The NPH3 domain maps to 210 to 468 (DWWVEDVCEL…VQVLYFEQLR (259 aa)). Tyr409 carries the phosphotyrosine modification. The interval 475–571 (ASVAASSHSP…SSRRRRHSIS (97 aa)) is disordered. A compositionally biased stretch (basic and acidic residues) spans 484-504 (PVEKTEENKGEEATKKVELSK). Residues 540-562 (SNKSSEVSSGSSQSPPAKSSSSS) are compositionally biased toward low complexity.

The protein belongs to the NPH3 family. In terms of assembly, component of a complex made of PINs (e.g. PIN1 and PIN2), MAB4/MELs (e.g. NPY1/MAB4 and NPY5/MEL1) and AGC kinases (e.g. D6PK and PID) at the plasma membrane. Binds directly to PIN2 and PID. As to expression, accumulates in organ primordia such as cotyledons, leaves and floral organs. Expressed mainly in the apical regions of embryos including cotyledon tips and the apical meristem. Induced by the transcription factor ARF5/MP at the periphery of inflorescence meristems. Highly expressed in primary root tips and radicles.

The protein resides in the late endosome. Its subcellular location is the cell membrane. It localises to the cytoplasm. The protein localises to the cytosol. It participates in protein modification; protein ubiquitination. Functionally, may act as a substrate-specific adapter of an E3 ubiquitin-protein ligase complex (CUL3-RBX1-BTB) which mediates the ubiquitination and subsequent proteasomal degradation of target proteins. Coregulates with PID the auxin-mediated plant organogenesis. Regulates basipetal PIN proteins (e.g. PIN1) polarization to establish inward auxin transport from the L1 surface of incipient organ primordia; this process is essential for the progression of flower organs development. Recruited to the plasma membrane by PINs (e.g. PIN1 and PIN2) and, in concert with AGC kinases-mediated (e.g. D6PK and PID) PINs phosphorylation, maintains their cell polarity (apical or basal) through limiting lateral diffusion-based escape. Induces auxin response in inner cell layers through a shift in PIN1 localization. Influences cotyledon development by regulating auxin distribution mainly in the protodermal cell layer. May play an essential role in root gravitropic responses. The chain is Phototropic-responsive NPH3 family protein NPY1 from Arabidopsis thaliana (Mouse-ear cress).